The following is a 368-amino-acid chain: MAAVITWALALLAVFASTQARKSLWDYFSQNSWSKGVMGQPQKLAQENLKGSFEQDLYNMNNYLEKLGPLRGPGKEPPLLAQDPEGIRKQLQQELGEVSSRLEPYMAAKHQQVGWNLEGLRQQLKPYTAELMEQVGLSVQELQEQLRVVGEDTKAQLLGGVDEALNLLQDMQSRVLHHTDRVKELFHPYAERLVTGIGHHVQELHRSVAPHAAASPARLSRCVQTLSHKLTRKAKDLHTSIQRNLDQLRDELSAFIRVSTDGAEDGDSLDPQALSEEVRQRLQAFRHDTYLQIAAFTQAIDQETEEIQHQLAPPPPSHSAFAPELGHSDSNKALSRLQSRLDDLWEDIAYGLQDQGHSHLSDPEGHSG.

An N-terminal signal peptide occupies residues 1–20 (MAAVITWALALLAVFASTQA). A Phosphoserine modification is found at S52. Residues 231 to 255 (TRKAKDLHTSIQRNLDQLRDELSAF) are a coiled coil. The tract at residues 305–333 (EEIQHQLAPPPPSHSAFAPELGHSDSNKA) is disordered.

Belongs to the apolipoprotein A1/A4/E family. In terms of assembly, interacts with GPIHBP1. Interacts with SORL1; this interaction leads to APOA5 internalization and sorting either to lysosomes and degradation, or to the trans-Golgi network. In terms of processing, phosphorylated by FAM20C in the extracellular medium. As to expression, liver.

The protein localises to the secreted. It localises to the early endosome. The protein resides in the late endosome. It is found in the golgi apparatus. Its subcellular location is the trans-Golgi network. Minor apolipoprotein mainly associated with HDL and to a lesser extent with VLDL. May also be associated with chylomicrons. Important determinant of plasma triglyceride (TG) levels by both being a potent stimulator of apo-CII lipoprotein lipase (LPL) TG hydrolysis and an inhibitor of the hepatic VLDL-TG production rate (without affecting the VLDL-apoB production rate). Activates poorly lecithin:cholesterol acyltransferase (LCAT) and does not enhance efflux of cholesterol from macrophages. Binds heparin. The polypeptide is Apolipoprotein A-V (Apoa5) (Mus musculus (Mouse)).